We begin with the raw amino-acid sequence, 146 residues long: MSKSLIVYGSTTGNTETAAEYVAEAFENKEIDVELKNVTDVSVADLGNGYDIVLFGCSTWGEEEIELQDDFIPLYDSLENADLKGKKVSVFGCGDSDYTYFCGAVDAIEEKLEKMGAVVIGDSLKIDGDPERDEIVSWGSGIADKI.

The Flavodoxin-like domain maps to 4-143 (SLIVYGSTTG…EIVSWGSGIA (140 aa)).

It belongs to the flavodoxin family. FMN is required as a cofactor.

Its function is as follows. Low-potential electron donor to a number of redox enzymes. The polypeptide is Flavodoxin (Maridesulfovibrio salexigens (strain ATCC 14822 / DSM 2638 / NCIMB 8403 / VKM B-1763) (Desulfovibrio salexigens)).